We begin with the raw amino-acid sequence, 153 residues long: MGGFGSRFWQEGVWDRDLEKSTRLEEDAMESEPLAGTKTRGRGRRRWEARHGWTLPAHASQPSPRTVVATATGAEVSACAGRSAGTRVARPESQLSHLYGWDKYSNPRPSRRARAVARVHALEQAPILCRALRWGLTQFLRGTSPVTQSVPFS.

The interval 19 to 46 is disordered; the sequence is EKSTRLEEDAMESEPLAGTKTRGRGRRR.

This is an uncharacterized protein from Homo sapiens (Human).